Reading from the N-terminus, the 212-residue chain is Cytidylate kinase (212 aa).

Residue 9–17 (GPAAAGKGT) participates in ATP binding.

Belongs to the cytidylate kinase family. Type 1 subfamily.

Its subcellular location is the cytoplasm. The catalysed reaction is CMP + ATP = CDP + ADP. It catalyses the reaction dCMP + ATP = dCDP + ADP. This chain is Cytidylate kinase, found in Sinorhizobium medicae (strain WSM419) (Ensifer medicae).